The primary structure comprises 558 residues: Glutamine-dependent NAD(+) synthetase (558 aa).

One can recognise a CN hydrolase domain in the interval 2–262 (FTIALAQLNP…LALLSYDLSS (261 aa)). Residue glutamate 42 is the Proton acceptor; for glutaminase activity of the active site. Lysine 117 (for glutaminase activity) is an active-site residue. L-glutamine is bound at residue tyrosine 123. Cysteine 153 (nucleophile; for glutaminase activity) is an active-site residue. Residues serine 190 and lysine 196 each coordinate L-glutamine. The interval 284–558 (ALVLGVGDYL…IAQAFHPQGS (275 aa)) is ligase. 304–311 (GLSGGIDS) provides a ligand contact to ATP. Asparagine 387 serves as a coordination point for deamido-NAD(+). Position 411 (threonine 411) interacts with ATP. Deamido-NAD(+) is bound by residues glutamate 416 and lysine 526.

This sequence in the C-terminal section; belongs to the NAD synthetase family.

The enzyme catalyses deamido-NAD(+) + L-glutamine + ATP + H2O = L-glutamate + AMP + diphosphate + NAD(+) + H(+). It participates in cofactor biosynthesis; NAD(+) biosynthesis; NAD(+) from deamido-NAD(+) (L-Gln route): step 1/1. In terms of biological role, catalyzes the ATP-dependent amidation of deamido-NAD to form NAD. Uses L-glutamine as a nitrogen source. The chain is Glutamine-dependent NAD(+) synthetase from Synechocystis sp. (strain ATCC 27184 / PCC 6803 / Kazusa).